A 254-amino-acid chain; its full sequence is D-aminoacyl-tRNA deacylase (254 aa).

A disordered region spans residues 61–83 (KPTLTVHTPGNLTEDNSHGGNPE). The segment covering 65 to 74 (TVHTPGNLTE) has biased composition (polar residues).

It belongs to the DtdA deacylase family. In terms of assembly, monomer. It depends on Zn(2+) as a cofactor.

It catalyses the reaction a D-aminoacyl-tRNA + H2O = a tRNA + a D-alpha-amino acid + H(+). It carries out the reaction glycyl-tRNA(Ala) + H2O = tRNA(Ala) + glycine + H(+). D-aminoacyl-tRNA deacylase with broad substrate specificity. By recycling D-aminoacyl-tRNA to D-amino acids and free tRNA molecules, this enzyme counteracts the toxicity associated with the formation of D-aminoacyl-tRNA entities in vivo. The polypeptide is D-aminoacyl-tRNA deacylase (Methanococcus maripaludis (strain C7 / ATCC BAA-1331)).